Reading from the N-terminus, the 380-residue chain is Cytochrome b (380 aa).

4 consecutive transmembrane segments (helical) span residues 34–54, 78–99, 114–134, and 179–199; these read FGSL…LLAT, WLIR…YLHI, WNTG…GYVL, and FFAL…IHLA. Histidine 84 and histidine 98 together coordinate heme b. 2 residues coordinate heme b: histidine 183 and histidine 197. Histidine 202 is an a ubiquinone binding site. The next 4 helical transmembrane spans lie at 227–247, 289–309, 321–341, and 348–368; these read LKDI…ALFS, LGGV…PFLH, LSQI…WIGS, and FIII…ILFP.

The protein belongs to the cytochrome b family. As to quaternary structure, the cytochrome bc1 complex contains 11 subunits: 3 respiratory subunits (MT-CYB, CYC1 and UQCRFS1), 2 core proteins (UQCRC1 and UQCRC2) and 6 low-molecular weight proteins (UQCRH/QCR6, UQCRB/QCR7, UQCRQ/QCR8, UQCR10/QCR9, UQCR11/QCR10 and a cleavage product of UQCRFS1). This cytochrome bc1 complex then forms a dimer. Heme b serves as cofactor.

Its subcellular location is the mitochondrion inner membrane. In terms of biological role, component of the ubiquinol-cytochrome c reductase complex (complex III or cytochrome b-c1 complex) that is part of the mitochondrial respiratory chain. The b-c1 complex mediates electron transfer from ubiquinol to cytochrome c. Contributes to the generation of a proton gradient across the mitochondrial membrane that is then used for ATP synthesis. This is Cytochrome b (MT-CYB) from Callipepla gambelii (Gambel's quail).